The chain runs to 126 residues: Small ribosomal subunit protein uS12 (126 aa).

D89 bears the 3-methylthioaspartic acid mark.

Belongs to the universal ribosomal protein uS12 family. As to quaternary structure, part of the 30S ribosomal subunit. Contacts proteins S8 and S17. May interact with IF1 in the 30S initiation complex.

Functionally, with S4 and S5 plays an important role in translational accuracy. In terms of biological role, interacts with and stabilizes bases of the 16S rRNA that are involved in tRNA selection in the A site and with the mRNA backbone. Located at the interface of the 30S and 50S subunits, it traverses the body of the 30S subunit contacting proteins on the other side and probably holding the rRNA structure together. The combined cluster of proteins S8, S12 and S17 appears to hold together the shoulder and platform of the 30S subunit. The sequence is that of Small ribosomal subunit protein uS12 from Carboxydothermus hydrogenoformans (strain ATCC BAA-161 / DSM 6008 / Z-2901).